A 307-amino-acid chain; its full sequence is UDP-N-acetylenolpyruvoylglucosamine reductase (307 aa).

The FAD-binding PCMH-type domain occupies 33–197; it reads TGGNADFYIT…LEAAFTLAPG (165 aa). Arg-176 is a catalytic residue. Residue Ser-226 is the Proton donor of the active site. Glu-296 is an active-site residue.

The protein belongs to the MurB family. The cofactor is FAD.

The protein resides in the cytoplasm. It carries out the reaction UDP-N-acetyl-alpha-D-muramate + NADP(+) = UDP-N-acetyl-3-O-(1-carboxyvinyl)-alpha-D-glucosamine + NADPH + H(+). It functions in the pathway cell wall biogenesis; peptidoglycan biosynthesis. Its function is as follows. Cell wall formation. The polypeptide is UDP-N-acetylenolpyruvoylglucosamine reductase (Staphylococcus aureus (strain MRSA252)).